The primary structure comprises 1345 residues: Protein dispatched homolog 2 (1345 aa).

Positions 1–28 (MAPEASPERSCSLHTCPLEDPTGAPVPP) are disordered. The chain crosses the membrane as a helical span at residues 125 to 145 (VAVIVGCLAFIFLCTLAGLLG). Asparagine 304 and asparagine 420 each carry an N-linked (GlcNAc...) asparagine glycan. One can recognise an SSD domain in the interval 429–598 (LGLKPRLLKY…LLWLPATVVL (170 aa)). The next 6 helical transmembrane spans lie at 440–460 (LAEDTMYPLIALVVIFFGMSL), 465–485 (LFITFMSLLGVLGSLMVAYFL), 497–517 (FVNLAALLLLSGVCVNYTLIF), 544–564 (FGYLLLVSGLTTSAAFYGSYL), 572–592 (CFALFMGTAVLVHMGLTLLWL), and 659–679 (YIWICWFAALAAGGAYIGGVS). Asparagine 776 carries N-linked (GlcNAc...) asparagine glycosylation. The next 5 helical transmembrane spans lie at 919-939 (PAVVLGLALALAFATLLLSTW), 945-965 (LFSVAAVAGTVLLTVGLLVLL), 974-994 (ALFLSASVGLSVDLTINYCIS), 1019-1039 (AMTTGVLFASGVIMLPSTILL), and 1043-1063 (LGIIVMMVKFLGCGFASFFFQ). Disordered stretches follow at residues 1251–1271 (VRVPDSVGTSPEVMNGTGHPI) and 1295–1345 (PNMP…GYSS). Positions 1297 to 1306 (MPNSHHSSLS) are enriched in polar residues. Omega-N-methylarginine is present on arginine 1310.

Belongs to the dispatched family.

Its subcellular location is the membrane. The protein is Protein dispatched homolog 2 (Disp2) of Mus musculus (Mouse).